Here is a 223-residue protein sequence, read N- to C-terminus: Cytidylate kinase (223 aa).

The interval 1–23 (MSTSPLVIAIDGPSGSGKSSTSR) is disordered. 12–20 (GPSGSGKSS) lines the ATP pocket.

Belongs to the cytidylate kinase family. Type 1 subfamily.

It localises to the cytoplasm. The enzyme catalyses CMP + ATP = CDP + ADP. It catalyses the reaction dCMP + ATP = dCDP + ADP. The chain is Cytidylate kinase from Cutibacterium acnes (strain DSM 16379 / KPA171202) (Propionibacterium acnes).